Consider the following 156-residue polypeptide: uncharacterized protein (156 aa).

An N-acetyltransferase domain is found at 10–156; that stretch reads VAARTFPLAC…NDYVMVRELV (147 aa).

Belongs to the acetyltransferase family.

This is an uncharacterized protein from Mycobacterium bovis (strain ATCC BAA-935 / AF2122/97).